The primary structure comprises 384 residues: O-phospho-L-seryl-tRNA:Cys-tRNA synthase 1 (384 aa).

Pyridoxal 5'-phosphate is bound by residues 88-89, asparagine 195, and 218-220; these read AR and SGH. An N6-(pyridoxal phosphate)lysine modification is found at lysine 221.

This sequence belongs to the SepCysS family. Homodimer. Interacts with SepRS. The cofactor is pyridoxal 5'-phosphate.

It carries out the reaction O-phospho-L-seryl-tRNA(Cys) + hydrogen sulfide + H(+) = L-cysteinyl-tRNA(Cys) + phosphate. Functionally, converts O-phospho-L-seryl-tRNA(Cys) (Sep-tRNA(Cys)) to L-cysteinyl-tRNA(Cys) (Cys-tRNA(Cys)). The protein is O-phospho-L-seryl-tRNA:Cys-tRNA synthase 1 of Methanocella arvoryzae (strain DSM 22066 / NBRC 105507 / MRE50).